Here is a 422-residue protein sequence, read N- to C-terminus: Histidine--tRNA ligase (422 aa).

It belongs to the class-II aminoacyl-tRNA synthetase family. Homodimer.

It is found in the cytoplasm. It catalyses the reaction tRNA(His) + L-histidine + ATP = L-histidyl-tRNA(His) + AMP + diphosphate + H(+). The protein is Histidine--tRNA ligase of Syntrophomonas wolfei subsp. wolfei (strain DSM 2245B / Goettingen).